Consider the following 511-residue polypeptide: Exodeoxyribonuclease 7 large subunit (511 aa).

It belongs to the XseA family. In terms of assembly, heterooligomer composed of large and small subunits.

It is found in the cytoplasm. It catalyses the reaction Exonucleolytic cleavage in either 5'- to 3'- or 3'- to 5'-direction to yield nucleoside 5'-phosphates.. Functionally, bidirectionally degrades single-stranded DNA into large acid-insoluble oligonucleotides, which are then degraded further into small acid-soluble oligonucleotides. In Brucella melitensis biotype 1 (strain ATCC 23456 / CCUG 17765 / NCTC 10094 / 16M), this protein is Exodeoxyribonuclease 7 large subunit.